Here is an 85-residue protein sequence, read N- to C-terminus: MGLKLHIHWFDKKTEEFKGGEYSKDFGDDGSVIESLGMPLKDNINNGWFDVEKPWVSILQPHFKNVIDISKFDYFVSFVYRDGNW.

N6-methyllysine is present on Lys12.

Belongs to the cloacin immunity protein family.

In terms of biological role, this protein complexes with cloacin protein in equimolar amounts and inhibits it by binding with high affinity to the C-terminal catalytic domain of cloacin. In Escherichia coli, this protein is Cloacin immunity protein (cim).